A 490-amino-acid polypeptide reads, in one-letter code: Nuclear transcription factor Y subunit beta (490 aa).

The tract at residues 1-48 (MSGNEDFIYDDNSSSSISNQTDGGGGGGSSNNNSGGNANNNNNEGDRE) is disordered. Over residues 30-43 (SNNNSGGNANNNNN) the composition is skewed to low complexity. A DNA-binding region spans residues 53 to 59 (LPIANII). The subunit association domain (SAD) stretch occupies residues 80–91 (VQDCVSEFISFI). Disordered regions lie at residues 139 to 195 (EKNS…QQQQ) and 221 to 264 (QQQQ…NQQY). Low complexity predominate over residues 181 to 195 (QQQQQPPQVQQQQQQ). A coiled-coil region spans residues 188–219 (QVQQQQQQQQQQQQQQLQQQQQLQQHQQQQLQ). Residues 269 to 307 (QQQQQQQQQQQQQQQQQQQQQQQQQQQQQQQQQQQQQVQ) adopt a coiled-coil conformation. Disordered regions lie at residues 325 to 370 (NQQA…QHLQ) and 399 to 490 (QFSN…PSTS). Positions 399–468 (QFSNNNNNNN…GNSLHNSGNS (70 aa)) are enriched in low complexity. Polar residues predominate over residues 478–490 (PYISTNPEYPSTS).

This sequence belongs to the NFYB/HAP3 subunit family. As to quaternary structure, heterotrimeric transcription factor composed of three components, nfyA, nfyB and nfyC. nfyB and nfyC must interact and dimerize for nfyA association and DNA binding.

Its subcellular location is the nucleus. Functionally, component of the NF-Y/HAP transcription factor complex. The NF-Y complex stimulates the transcription of various genes by recognizing and binding to a CCAAT motif in promoters. In Dictyostelium discoideum (Social amoeba), this protein is Nuclear transcription factor Y subunit beta (nfyB).